Consider the following 129-residue polypeptide: Small ribosomal subunit protein uS11 (129 aa).

This sequence belongs to the universal ribosomal protein uS11 family. Part of the 30S ribosomal subunit. Interacts with proteins S7 and S18. Binds to IF-3.

Its function is as follows. Located on the platform of the 30S subunit, it bridges several disparate RNA helices of the 16S rRNA. Forms part of the Shine-Dalgarno cleft in the 70S ribosome. This is Small ribosomal subunit protein uS11 from Beijerinckia indica subsp. indica (strain ATCC 9039 / DSM 1715 / NCIMB 8712).